The sequence spans 89 residues: Small ribosomal subunit protein uS15 (89 aa).

The protein belongs to the universal ribosomal protein uS15 family. Part of the 30S ribosomal subunit. Forms a bridge to the 50S subunit in the 70S ribosome, contacting the 23S rRNA.

Its function is as follows. One of the primary rRNA binding proteins, it binds directly to 16S rRNA where it helps nucleate assembly of the platform of the 30S subunit by binding and bridging several RNA helices of the 16S rRNA. Forms an intersubunit bridge (bridge B4) with the 23S rRNA of the 50S subunit in the ribosome. The polypeptide is Small ribosomal subunit protein uS15 (Sulfurovum sp. (strain NBC37-1)).